A 166-amino-acid polypeptide reads, in one-letter code: NAD(P)H-quinone oxidoreductase subunit I, chloroplastic (166 aa).

2 consecutive 4Fe-4S ferredoxin-type domains span residues G55 to K84 and L95 to E124. [4Fe-4S] cluster contacts are provided by C64, C67, C70, C74, C104, C107, C110, and C114.

The protein belongs to the complex I 23 kDa subunit family. As to quaternary structure, NDH is composed of at least 16 different subunits, 5 of which are encoded in the nucleus. Requires [4Fe-4S] cluster as cofactor.

Its subcellular location is the plastid. It is found in the chloroplast thylakoid membrane. It catalyses the reaction a plastoquinone + NADH + (n+1) H(+)(in) = a plastoquinol + NAD(+) + n H(+)(out). The catalysed reaction is a plastoquinone + NADPH + (n+1) H(+)(in) = a plastoquinol + NADP(+) + n H(+)(out). Its function is as follows. NDH shuttles electrons from NAD(P)H:plastoquinone, via FMN and iron-sulfur (Fe-S) centers, to quinones in the photosynthetic chain and possibly in a chloroplast respiratory chain. The immediate electron acceptor for the enzyme in this species is believed to be plastoquinone. Couples the redox reaction to proton translocation, and thus conserves the redox energy in a proton gradient. This is NAD(P)H-quinone oxidoreductase subunit I, chloroplastic from Pericome caudata (Mountain tail-leaf).